The chain runs to 101 residues: Salivary thrombin inhibitor anophelin (101 aa).

Positions 1-21 (MASKVIVIALLCIALAAFVQG) are cleaved as a signal peptide. The tract at residues 26-101 (THGEEPEYDE…SDSSSGSTEN (76 aa)) is disordered. Positions 31–40 (PEYDEDDGAD) are enriched in acidic residues. Residues 75 to 78 (DPGR) are blocks active site cleft of host thrombin in a reverse direction compared to substrates. The segment covering 75-87 (DPGRRPEFLKQHN) has biased composition (basic and acidic residues). Positions 88 to 101 (NENQSDSSSGSTEN) are enriched in polar residues. N-linked (GlcNAc...) asparagine glycosylation occurs at Asn-90.

It belongs to the anophelin family. As to quaternary structure, interacts with human F2 (thrombin); the interaction results in thrombin inhibition.

Its subcellular location is the secreted. In terms of biological role, salivary protein with anticoagulant activity that inhibits host thrombin (F2). The chain is Salivary thrombin inhibitor anophelin from Anopheles stephensi (Indo-Pakistan malaria mosquito).